A 38-amino-acid chain; its full sequence is Photosystem II reaction center protein L (38 aa).

Residues 17–37 traverse the membrane as a helical segment; that stretch reads SLYWGLLLIFVLAVLFSSYFF.

Belongs to the PsbL family. PSII is composed of 1 copy each of membrane proteins PsbA, PsbB, PsbC, PsbD, PsbE, PsbF, PsbH, PsbI, PsbJ, PsbK, PsbL, PsbM, PsbT, PsbX, PsbY, PsbZ, Psb30/Ycf12, at least 3 peripheral proteins of the oxygen-evolving complex and a large number of cofactors. It forms dimeric complexes.

Its subcellular location is the plastid. The protein resides in the chloroplast thylakoid membrane. One of the components of the core complex of photosystem II (PSII). PSII is a light-driven water:plastoquinone oxidoreductase that uses light energy to abstract electrons from H(2)O, generating O(2) and a proton gradient subsequently used for ATP formation. It consists of a core antenna complex that captures photons, and an electron transfer chain that converts photonic excitation into a charge separation. This subunit is found at the monomer-monomer interface and is required for correct PSII assembly and/or dimerization. This Ephedra sinica (Chinese ephedra) protein is Photosystem II reaction center protein L.